The sequence spans 182 residues: ATP synthase subunit delta 2 (182 aa).

Belongs to the ATPase delta chain family. As to quaternary structure, F-type ATPases have 2 components, F(1) - the catalytic core - and F(0) - the membrane proton channel. F(1) has five subunits: alpha(3), beta(3), gamma(1), delta(1), epsilon(1). F(0) has three main subunits: a(1), b(2) and c(10-14). The alpha and beta chains form an alternating ring which encloses part of the gamma chain. F(1) is attached to F(0) by a central stalk formed by the gamma and epsilon chains, while a peripheral stalk is formed by the delta and b chains.

It localises to the cell inner membrane. Its function is as follows. F(1)F(0) ATP synthase produces ATP from ADP in the presence of a proton or sodium gradient. F-type ATPases consist of two structural domains, F(1) containing the extramembraneous catalytic core and F(0) containing the membrane proton channel, linked together by a central stalk and a peripheral stalk. During catalysis, ATP synthesis in the catalytic domain of F(1) is coupled via a rotary mechanism of the central stalk subunits to proton translocation. In terms of biological role, this protein is part of the stalk that links CF(0) to CF(1). It either transmits conformational changes from CF(0) to CF(1) or is implicated in proton conduction. The sequence is that of ATP synthase subunit delta 2 from Photobacterium profundum (strain SS9).